The following is a 435-amino-acid chain: 5-methylthioadenosine/S-adenosylhomocysteine deaminase (435 aa).

Zn(2+) is bound by residues His65 and His67. Positions 94, 150, and 189 each coordinate substrate. His216 contacts Zn(2+). Positions 219 and 304 each coordinate substrate. Asp304 provides a ligand contact to Zn(2+).

This sequence belongs to the metallo-dependent hydrolases superfamily. MTA/SAH deaminase family. The cofactor is Zn(2+).

The catalysed reaction is S-adenosyl-L-homocysteine + H2O + H(+) = S-inosyl-L-homocysteine + NH4(+). It catalyses the reaction S-methyl-5'-thioadenosine + H2O + H(+) = S-methyl-5'-thioinosine + NH4(+). Catalyzes the deamination of 5-methylthioadenosine and S-adenosyl-L-homocysteine into 5-methylthioinosine and S-inosyl-L-homocysteine, respectively. Is also able to deaminate adenosine. The chain is 5-methylthioadenosine/S-adenosylhomocysteine deaminase from Bacillus cereus (strain ATCC 14579 / DSM 31 / CCUG 7414 / JCM 2152 / NBRC 15305 / NCIMB 9373 / NCTC 2599 / NRRL B-3711).